We begin with the raw amino-acid sequence, 378 residues long: Glutamate 5-kinase 1 (378 aa).

Residue K13 coordinates ATP. Substrate is bound by residues S53, D140, and N152. 172 to 173 contributes to the ATP binding site; it reads SD. The 78-residue stretch at 278 to 355 folds into the PUA domain; that stretch reads AGRLTVDAGA…AEIETVLGYE (78 aa).

The protein belongs to the glutamate 5-kinase family.

The protein localises to the cytoplasm. The enzyme catalyses L-glutamate + ATP = L-glutamyl 5-phosphate + ADP. The protein operates within amino-acid biosynthesis; L-proline biosynthesis; L-glutamate 5-semialdehyde from L-glutamate: step 1/2. In terms of biological role, catalyzes the transfer of a phosphate group to glutamate to form L-glutamate 5-phosphate. This chain is Glutamate 5-kinase 1, found in Mesorhizobium japonicum (strain LMG 29417 / CECT 9101 / MAFF 303099) (Mesorhizobium loti (strain MAFF 303099)).